The following is an 85-amino-acid chain: Large ribosomal subunit protein bL27 (85 aa).

The disordered stretch occupies residues 1–23 (MAHKKGQGSTQNNRDSAGRRLGV).

The protein belongs to the bacterial ribosomal protein bL27 family.

The chain is Large ribosomal subunit protein bL27 from Aliarcobacter butzleri (strain RM4018) (Arcobacter butzleri).